The primary structure comprises 808 residues: Probable E3 ubiquitin-protein ligase MARCHF10 (808 aa).

3 disordered regions span residues 33-81 (LRRQ…LTEP), 101-268 (QTSV…RKAS), and 284-415 (SRRE…EVGV). Over residues 34–49 (RRQEYRRDPNEKKRDQ) the composition is skewed to basic and acidic residues. Over residues 237–249 (QAFQGKNSPQVLS) the composition is skewed to polar residues. Composition is skewed to basic and acidic residues over residues 330-349 (KNFE…RSEP) and 379-397 (LPDR…ENAK). The RING-CH-type zinc-finger motif lies at 651-721 (DSEEEGDLCR…EMCKQGLLVD (71 aa)). Zn(2+)-binding residues include Cys659, Cys662, Cys677, Cys679, His687, Cys690, Cys711, and Cys714. The segment at 773–808 (ERERLSRNYPQPRTEENENSELGDGNEGSISQSQVV) is disordered.

It catalyses the reaction S-ubiquitinyl-[E2 ubiquitin-conjugating enzyme]-L-cysteine + [acceptor protein]-L-lysine = [E2 ubiquitin-conjugating enzyme]-L-cysteine + N(6)-ubiquitinyl-[acceptor protein]-L-lysine.. It participates in protein modification; protein ubiquitination. In terms of biological role, E3 ubiquitin-protein ligase. E3 ubiquitin ligases accept ubiquitin from an E2 ubiquitin-conjugating enzyme in the form of a thioester and then directly transfer the ubiquitin to targeted substrates. In Homo sapiens (Human), this protein is Probable E3 ubiquitin-protein ligase MARCHF10.